Here is a 133-residue protein sequence, read N- to C-terminus: Large ribosomal subunit protein uL15 (133 aa).

Residues 1 to 58 (MALQNLTPAPGSTHATKRLGRGQGSGNGKTAGKGNKGQRARKGYNEKRGFEGGQQPLQ) form a disordered region. Over residues 21–35 (RGQGSGNGKTAGKGN) the composition is skewed to gly residues.

Belongs to the universal ribosomal protein uL15 family. In terms of assembly, part of the 50S ribosomal subunit.

In terms of biological role, binds to the 23S rRNA. This chain is Large ribosomal subunit protein uL15, found in Campylobacter curvus (strain 525.92).